A 429-amino-acid chain; its full sequence is 4-hydroxyphenylacetate degradation bifunctional isomerase/decarboxylase (429 aa).

2 Approximate repeats span residues 1–215 and 216–429; these read MKGT…NQTF and TWPL…ESAN. A divalent metal cation contacts are provided by E276, E278, and D307.

It belongs to the FAH family. In terms of assembly, monomer. The cofactor is Mg(2+).

It catalyses the reaction (2E,4Z)-5-hydroxypenta-2,4-diene-1,2,5-tricarboxylate = (3E,5R)-5-carboxy-2-oxohept-3-enedioate. The enzyme catalyses (3E,5R)-5-carboxy-2-oxohept-3-enedioate + H(+) = (4Z)-2-oxohept-4-enedioate + CO2. Its pathway is aromatic compound metabolism; 4-hydroxyphenylacetate degradation; pyruvate and succinate semialdehyde from 4-hydroxyphenylacetate: step 4/7. It participates in aromatic compound metabolism; 4-hydroxyphenylacetate degradation; pyruvate and succinate semialdehyde from 4-hydroxyphenylacetate: step 5/7. Decarboxylates OPET (5-oxo-pent-3-ene-1,2,5-tricarboxylic acid) into HHDD (2-hydroxy-hept-2,4-diene-1,7-dioate) and isomerizes it to OHED (2-oxo-hept-3-ene-1,7-dioate). The chain is 4-hydroxyphenylacetate degradation bifunctional isomerase/decarboxylase (hpaG) from Salmonella dublin.